Reading from the N-terminus, the 312-residue chain is Acetyl-coenzyme A carboxylase carboxyl transferase subunit alpha (312 aa).

In terms of domain architecture, CoA carboxyltransferase C-terminal spans 36 to 286; sequence RLEKEVKSIY…KEYFLDALRT (251 aa).

This sequence belongs to the AccA family. Acetyl-CoA carboxylase is a heterohexamer composed of biotin carboxyl carrier protein (AccB), biotin carboxylase (AccC) and two subunits each of ACCase subunit alpha (AccA) and ACCase subunit beta (AccD).

It is found in the cytoplasm. It catalyses the reaction N(6)-carboxybiotinyl-L-lysyl-[protein] + acetyl-CoA = N(6)-biotinyl-L-lysyl-[protein] + malonyl-CoA. It functions in the pathway lipid metabolism; malonyl-CoA biosynthesis; malonyl-CoA from acetyl-CoA: step 1/1. In terms of biological role, component of the acetyl coenzyme A carboxylase (ACC) complex. First, biotin carboxylase catalyzes the carboxylation of biotin on its carrier protein (BCCP) and then the CO(2) group is transferred by the carboxyltransferase to acetyl-CoA to form malonyl-CoA. The polypeptide is Acetyl-coenzyme A carboxylase carboxyl transferase subunit alpha (Helicobacter pylori (strain P12)).